We begin with the raw amino-acid sequence, 303 residues long: Coenzyme PQQ synthesis protein B (303 aa).

The protein belongs to the PqqB family.

It functions in the pathway cofactor biosynthesis; pyrroloquinoline quinone biosynthesis. In terms of biological role, may be involved in the transport of PQQ or its precursor to the periplasm. This is Coenzyme PQQ synthesis protein B from Pseudomonas savastanoi pv. phaseolicola (strain 1448A / Race 6) (Pseudomonas syringae pv. phaseolicola (strain 1448A / Race 6)).